The sequence spans 1666 residues: MPPNTVNKAAEIPPFEPIAIVGIGIRGPGGINSLTTLWDTLVERKSHCFPLAKDPRFQRRFNPDDFKALFDGIPDSENVLHANLFDETPGLDRTYFSLSEREAAGMDVQQKLLLHVAHEALEDAGYSGAEDGSAFDPSTFGVYVATATDEVIQDPRDYDTDIYHLVRTERAFLSGQICFHFGLRGPSSSVDTVCSGSITAINDACRALATGDCRAAIAGGVHVVTPVSGPISFYCIKRAGFLDRTGQCKPFLQNGTGYSRSEGCGLVVMKRLSDAIREGDRIHGVIRGLCIRSMASPKFISQPNGAFQSVALAQAVKISGVDPAAISFVEAHGPGTAKGDLAEVSSLCSVLAQHRAVDNPLTVGSLKGNVGHAEAASGTHSLAKVIAMFQRRRIPPQADFHPSRLNPTLQPFFDKHPIRIIENEEDWNASHRIAVVGNFGASGNAGFMVIEEGSTFQPLEGRDVPKVSSPLPFVISAKDQATLVKLIHLYIDWLKQPSTFLTPLSDISYAMTARRFIHPFMISVQADSHMDLVQKLQERPPMINGSANRTPREVAFCFSGQGGERVDPRDSTLYNFSASFTDAVDMCFRVAESENLVAEEDVAILELFALEFGLVEMWKSWGIKPVALAGHSFGEYVALVCAGVLTVRDALKLLGIRAALIRAMCLDVPGKMAAVRLPLSDVNKCLEQQKSTRVELACVNSDNSVTVAGTPEDLESFRQELLKWYPAASWHLLNNMTAAFHSRFVQPILADFTNACNEVKVHPSEMVVLSGLLGKMCPVGDAVLQQHDYLVRHCRETNRFGTAISDYQRQNVERETPQPDWLEIGSHSRIISFITPASDQLKLPSHGKSAGEGWMTALDALMRLYSAGHVVDFKDVHYDVNPSAHHTDLPLYPFQLEPHFYPARREVKASSTMLASTNEVQFCPRVPSTELAPLLLNHVMAGYTLCPATTHVALMMAAASTFASSSQQEGRLAYKLSKLKVIAGFTNTTDGWLQVRRQSSTSDLEIISNDDNKIHITARAEVCKEQDLLESLSLYASFILPFKSFKFLPSTDVLRKELAYSLFNHTVNYGPHGQVLDRVWIAEDGYQAWGYSTYPGGASTAEGVPSALRDFSPMLIESVCQLIGFLMNTSTNRKDGEAFVTDELGDCSIAISKLYETKYVEIYASYKMVDGGTAGLGNVFAFDDKGQLISAFRDVRMAKMKIYVLKRLIDRGRKPEQVVTTQHVASTEVEEDNVAHNDIDDKVISVLKAALRLSEIPLDKTLGELGLDSLTAIDVGVQLERLVPHRRDHLTIDPEGNLTSLLQLLRPTPLPKSLPITSSTKESKVETVDLATSPSLPIMPNGVPTTVNGVPKPNALPTVNGLHKPNGAPAANGVPTANGVPTADGTSTEPSQTLVANISPEMLQAISSNPEVIQYAPGRTPLLLIHDGGGTSFAYYSLGNLDRTVIGIHCPGLQEGKGIESVHHAANEYANIARQYLKQQCPGHSKVLIGGWSLGGTISMMMAALFPDLVAGVVTIDTTPPGVVGLTAQQAESVLLHPWSRTDGIHGLVRRQLQLNTRASFAHPEYKTIIRVTAVNVPVYVLCAIDPFRPSESLDLPKETYQWLLSFKQSDVAEVTWKELIGERLLGVQSVPGNHWTMFTPANVKATTEALKQGLDVIEARLNKMG.

Residues 15–452 (FEPIAIVGIG…GNAGFMVIEE (438 aa)) enclose the Ketosynthase family 3 (KS3) domain. Catalysis depends on for beta-ketoacyl synthase activity residues Cys194, His332, and His372. A malonyl-CoA:ACP transacylase (MAT) domain region spans residues 555–863 (AFCFSGQGGE…WMTALDALMR (309 aa)). Ser632 serves as the catalytic For acyl/malonyl transferase activity. The segment at 905–1034 (REVKASSTML…EQDLLESLSL (130 aa)) is N-terminal hotdog fold. Positions 905–1206 (REVKASSTML…MAKMKIYVLK (302 aa)) constitute a PKS/mFAS DH domain. Residues 935 to 1203 (LLNHVMAGYT…DVRMAKMKIY (269 aa)) form a product template (PT) domain region. Positions 1050–1206 (STDVLRKELA…MAKMKIYVLK (157 aa)) are C-terminal hotdog fold. Ser1269 bears the O-(pantetheine 4'-phosphoryl)serine mark. The 65-residue stretch at 1331-1395 (ATSPSLPIMP…TSTEPSQTLV (65 aa)) folds into the Carrier domain. Residues 1334–1397 (PSLPIMPNGV…TEPSQTLVAN (64 aa)) are proline-rich linker region. An alpha/beta hydrolase superfamily-type thioesterase (TE) domain region spans residues 1444 to 1529 (TVIGIHCPGL…PPGVVGLTAQ (86 aa)).

The catalysed reaction is holo-[ACP] + 8 malonyl-CoA + 8 H(+) = atrochrysone carboxyl-[ACP] + 8 CO2 + 8 CoA + 2 H2O. The protein operates within secondary metabolite biosynthesis. Functionally, non-reducing polyketide synthase that synthesizes the universal anthraquinone precursor atrochrysone carboxylic acid from malonyl-CoA. Produces a mixture of both 3R and 3S enantiomers with an excess of the 3S form. PKS4 catalyzes both hepta- and octaketide synthesis and also yields 6-hydroxymusizin, probably via carboxylating activity inherent to the KS domain. This Calonarius odorifer (Mushroom) protein is Atrochrysone carboxylic acid synthase PKS4.